A 3122-amino-acid polypeptide reads, in one-letter code: tRNA nuclease CdiA-2 (3122 aa).

A two-partner system transport domain (TPS) region spans residues 36-205 (RAGVVPAWLS…ATLTTGNPNF (170 aa)). Residues 54-74 (VALAVLVAAGVVPIWVNAQVV) form a helical membrane-spanning segment. Positions 256-1254 (VVAGSNQVDY…GGSVAIQASG (999 aa)) are FHA-1. Positions 492–512 (GMTLGGGSLSNQGGRANSQGP) are disordered. Over residues 500–512 (LSNQGGRANSQGP) the composition is skewed to polar residues. The segment at 1345-1635 (TRRVMQTSGN…SATAVNVLSN (291 aa)) is receptor binding domain (RBD). The segment at 1790–1845 (TAGNIDLKNTQVFTNSGTVKADTTLALQGKQIDNAFGALQSGGLTSLDTTGNVDLT) is periplasmic FHA-1 repeat (pFR). An FHA-2 region spans residues 1947-2085 (SDTDLNSATG…TERHVYNSRE (139 aa)). Disordered regions lie at residues 2002 to 2031 (TSTI…ALTG), 2151 to 2174 (TTSQ…MSGG), and 2325 to 2352 (IGVQ…GSSI). The segment at 2086-2825 (THSRSGVVSG…SAGAAMASNV (740 aa)) is pretoxin (PT) domain. Composition is skewed to low complexity over residues 2151 to 2170 (TTSQ…HSGL) and 2325 to 2341 (IGVQ…MQSS). The span at 2342 to 2352 (EDQTIQRGSSI) shows a compositional bias: polar residues. The tract at residues 2821-3122 (MASNVELYNA…NITIIKPKGN (302 aa)) is C-terminal effector domain (CT), has tRNA nuclease activity. The ELYN C-terminal motif signature appears at 2826 to 2829 (ELYN). Residues 2948–3000 (GATDRTPPSNAILSNSNSDNNSTQGSQSGTVTKTPNPEATGSLSGKPTQIPPL) are disordered. A truncated CT domain, has tRNA nuclease activity, sufficient for interaction with CdiI-2 region spans residues 2948-3122 (GATDRTPPSN…NITIIKPKGN (175 aa)). The segment covering 2953–2994 (TPPSNAILSNSNSDNNSTQGSQSGTVTKTPNPEATGSLSGKP) has biased composition (polar residues). The tract at residues 2987-3122 (TGSLSGKPTQ…NITIIKPKGN (136 aa)) is has tRNase activity. Active-site residues include Glu3012, Asp3039, Asp3048, and Lys3067.

This sequence in the N-terminal section; belongs to the CdiA toxin family. As to quaternary structure, interacts with cognate immunity protein CdiI, which blocks its tRNA nuclease activity. The truncated CT fragment (residues 2948-3122) specifically interacts with cognate CdiI which inhibits the tRNA nuclease activity. The truncated CT is more stable in vitro than the original CT fragment characterized in E.coli.

It localises to the membrane. It is found in the secreted. The protein resides in the target cell. The protein localises to the target cell cytoplasm. In terms of biological role, toxic component of a toxin-immunity protein module, which functions as a cellular contact-dependent growth inhibition (CDI) system. CDI modules allow bacteria to communicate with and inhibit the growth of closely related neighboring bacteria in a contact-dependent fashion. The C-terminal 301 residues (the CT fragment) cleaves near the C-terminus of E.coli tRNA1B(Ala), probably preventing tRNA charging, and inhibits growth in E.coli. A truncated CT fragment (residues 2948-3122) has tRNA endonuclease activity on several B.thailandensis tRNAs as well as tRNA2(Arg) where it cleaves after A-70 and U-71. Inactive CT domain binds tRNA, probably in a 1:1 complex. Toxic activity is neutralized by coexpression of the cognate immunity protein CdiI in E.coli, but not by non-cognate immunity proteins from other strains of B.pseudomallei. May use lipopolysaccharide as its target cell receptor. Probably gains access to the cytoplasm of target cells (B.thailandensis strain E264) by using integral inner membrane protein BTH_II0599. Protein BTH_I0359 is also implicated in an unknown fashion in CDI in B.thailandensis strain E264. Expression of this cdiAIB locus in B.thailandensis confers protection against other bacteria carrying the locus; growth inhibition requires cellular contact. Its function is as follows. The CdiA protein is thought to be exported from the cell through the central lumen of CdiB, the other half of its two-partner system (TPS). The TPS domain probably remains associated with CdiB while the FHA-1 domain forms an extended filament with the receptor-binding domain (RBD) at its extremity; in the secretion arrested state the C-terminus of the RBD domain form a hairpin-like structure as the FHA-2, PT and CT domains are periplasmic. Upon binding to a target cell outer membrane receptor (possibly a lipoprotein in this CDI) a signal is transmitted to activate secretion. The filament elongates slightly, the rest of CdiA is secreted and the FHA-2 domain becomes stably associated with the target cell's outer membrane where it facilitates entry of the toxic CT domain into the target cell periplasm. From there the toxic CT domain is cleaved and gains access to the target cell cytoplasm via an inner membrane protein (probably inner membrane protein BTH_II0599). The protein is tRNA nuclease CdiA-2 (cdiA2) of Burkholderia pseudomallei (strain 1026b).